The following is a 111-amino-acid chain: Nascent polypeptide-associated complex protein (111 aa).

In terms of domain architecture, NAC-A/B spans 3–72 (GMNPRQMKKL…EEVREVLEIS (70 aa)).

This sequence belongs to the NAC-alpha family. Homodimer. Interacts with the ribosome. Binds ribosomal RNA.

Its function is as follows. Contacts the emerging nascent chain on the ribosome. The protein is Nascent polypeptide-associated complex protein of Thermococcus kodakarensis (strain ATCC BAA-918 / JCM 12380 / KOD1) (Pyrococcus kodakaraensis (strain KOD1)).